A 916-amino-acid polypeptide reads, in one-letter code: Oxysterol-binding protein 2 (916 aa).

Disordered regions lie at residues 1-20 (MGKA…SRGL), 34-121 (TAAP…PFTK), and 139-163 (PESG…TPLG). Pro residues predominate over residues 49–58 (EPKPQPQPVP). Residues 79–92 (RSEPVSETTSEPEP) are compositionally biased toward low complexity. Residues 99-113 (ELLQGSRPGSESSSG) are compositionally biased toward polar residues. Over residues 144–155 (LPALKPLPLLRP) the composition is skewed to low complexity. In terms of domain architecture, PH spans 182–274 (LDSFEGWLLK…WITALELAKA (93 aa)). Disordered stretches follow at residues 282 to 301 (THSD…DKSE) and 417 to 448 (FHSA…EEDE). Serine 287 carries the post-translational modification Phosphoserine. Serine 763 bears the Phosphoserine mark. The interval 813–842 (EGVAPTDSRLRPDQRLMEKGRWDEANTEKQ) is disordered.

It belongs to the OSBP family. In terms of assembly, interacts with CCDC159. As to expression, expressed mainly in retina, testis, and fetal liver.

It localises to the membrane. Its subcellular location is the cytoplasmic vesicle. The protein resides in the secretory vesicle. It is found in the acrosome. In terms of biological role, binds 7-ketocholesterol. Acts during spermatid development where its function is required prior to the removal of cytoplasm from the sperm head. In Homo sapiens (Human), this protein is Oxysterol-binding protein 2 (OSBP2).